The sequence spans 1226 residues: Chromosome-associated kinesin KIF4 (1226 aa).

The region spanning 8 to 337 (PVRVALRCRP…LRYADRARKI (330 aa)) is the Kinesin motor domain. 87–94 (GQTGSGKT) lines the ATP pocket. A coiled-coil region spans residues 351–1006 (ELQRLKLQVQ…YKQKLALLHV (656 aa)). The span at 494–505 (EAASFPVPEEDS) shows a compositional bias: acidic residues. 3 disordered regions span residues 494–516 (EAAS…GFTT), 722–741 (QRQK…GMEG), and 1052–1078 (DLLS…KQSK). Positions 722–735 (QRQKEAMEKRKDSQ) are enriched in basic and acidic residues. Residues 1007–1226 (ASGKKLHNIL…SGCSAITEDE (220 aa)) form a globular region. Residues 1053–1064 (LLSESESEEESD) show a composition bias toward acidic residues.

The protein belongs to the TRAFAC class myosin-kinesin ATPase superfamily. Kinesin family. Chromokinesin subfamily. It depends on [2Fe-2S] cluster as a cofactor. The cofactor is [4Fe-4S] cluster. Expressed in oocytes, eggs, testes and brain.

Its subcellular location is the nucleus. The protein localises to the chromosome. It localises to the cytoplasm. The protein resides in the cytoskeleton. Iron-sulfur (Fe-S) cluster binding motor protein that has a role in chromosome segregation during mitosis. Required for mitotic chromosomal positioning and bipolar spindle stabilization. This chain is Chromosome-associated kinesin KIF4 (kif4), found in Xenopus laevis (African clawed frog).